The primary structure comprises 217 residues: Pyridoxine/pyridoxamine 5'-phosphate oxidase (217 aa).

Residues R14–Y17 and K72 each bind substrate. Residues R67–K72, Y82–T83, R88, and K89 each bind FMN. 3 residues coordinate substrate: Y129, R133, and S137. Residues Q146–S147 and W190 each bind FMN. A substrate-binding site is contributed by R196 to H198. R200 provides a ligand contact to FMN.

The protein belongs to the pyridoxamine 5'-phosphate oxidase family. As to quaternary structure, homodimer. FMN is required as a cofactor.

It catalyses the reaction pyridoxamine 5'-phosphate + O2 + H2O = pyridoxal 5'-phosphate + H2O2 + NH4(+). The enzyme catalyses pyridoxine 5'-phosphate + O2 = pyridoxal 5'-phosphate + H2O2. It functions in the pathway cofactor metabolism; pyridoxal 5'-phosphate salvage; pyridoxal 5'-phosphate from pyridoxamine 5'-phosphate: step 1/1. It participates in cofactor metabolism; pyridoxal 5'-phosphate salvage; pyridoxal 5'-phosphate from pyridoxine 5'-phosphate: step 1/1. Its function is as follows. Catalyzes the oxidation of either pyridoxine 5'-phosphate (PNP) or pyridoxamine 5'-phosphate (PMP) into pyridoxal 5'-phosphate (PLP). This chain is Pyridoxine/pyridoxamine 5'-phosphate oxidase, found in Acidovorax sp. (strain JS42).